A 495-amino-acid chain; its full sequence is Leucine aminopeptidase 2 (495 aa).

Residues 1 to 21 (MKSQLLSLAVAVSTISQGVVG) form the signal peptide. The 95-residue stretch at 124-218 (PPANKIMAEL…EDGKNLASLV (95 aa)) folds into the PA domain. N-linked (GlcNAc...) asparagine glycosylation is found at Asn142 and Asn235. Zn(2+)-binding residues include His259 and Asp271. Asn272 carries N-linked (GlcNAc...) asparagine glycosylation. Residue Glu303 is the Proton acceptor of the active site. Positions 304 and 332 each coordinate Zn(2+). An N-linked (GlcNAc...) asparagine glycan is attached at Asn352. His430 contacts Zn(2+).

The protein belongs to the peptidase M28 family. M28A subfamily. As to quaternary structure, monomer. Zn(2+) is required as a cofactor.

The protein localises to the secreted. In terms of biological role, extracellular aminopeptidase that releases a wide variety of amino acids from natural peptides and contributes to pathogenicity. The protein is Leucine aminopeptidase 2 (LAP2) of Trichophyton equinum (Horse ringworm fungus).